We begin with the raw amino-acid sequence, 283 residues long: Bis(5'-nucleosyl)-tetraphosphatase, symmetrical (283 aa).

This sequence belongs to the Ap4A hydrolase family.

The catalysed reaction is P(1),P(4)-bis(5'-adenosyl) tetraphosphate + H2O = 2 ADP + 2 H(+). Functionally, hydrolyzes diadenosine 5',5'''-P1,P4-tetraphosphate to yield ADP. This chain is Bis(5'-nucleosyl)-tetraphosphatase, symmetrical, found in Pseudomonas fluorescens (strain SBW25).